The primary structure comprises 922 residues: DNA gyrase subunit A (922 aa).

The Topo IIA-type catalytic domain maps to 34 to 534 (LPDVRDGLKP…SSAEINIEDL (501 aa)). The active-site O-(5'-phospho-DNA)-tyrosine intermediate is Tyr122. Positions 561-567 (QRRGGRG) match the GyrA-box motif. Disordered stretches follow at residues 715–763 (MQPM…VRPM) and 899–922 (IDGE…DPEE). Residues 723-743 (DDVDGDDESVIDAGNDDDGSD) show a composition bias toward acidic residues.

This sequence belongs to the type II topoisomerase GyrA/ParC subunit family. As to quaternary structure, heterotetramer, composed of two GyrA and two GyrB chains. In the heterotetramer, GyrA contains the active site tyrosine that forms a transient covalent intermediate with DNA, while GyrB binds cofactors and catalyzes ATP hydrolysis.

The protein resides in the cytoplasm. The enzyme catalyses ATP-dependent breakage, passage and rejoining of double-stranded DNA.. A type II topoisomerase that negatively supercoils closed circular double-stranded (ds) DNA in an ATP-dependent manner to modulate DNA topology and maintain chromosomes in an underwound state. Negative supercoiling favors strand separation, and DNA replication, transcription, recombination and repair, all of which involve strand separation. Also able to catalyze the interconversion of other topological isomers of dsDNA rings, including catenanes and knotted rings. Type II topoisomerases break and join 2 DNA strands simultaneously in an ATP-dependent manner. The polypeptide is DNA gyrase subunit A (Aeromonas salmonicida).